We begin with the raw amino-acid sequence, 154 residues long: Large ribosomal subunit protein uL13 (154 aa).

Belongs to the universal ribosomal protein uL13 family. As to quaternary structure, part of the 50S ribosomal subunit.

In terms of biological role, this protein is one of the early assembly proteins of the 50S ribosomal subunit, although it is not seen to bind rRNA by itself. It is important during the early stages of 50S assembly. This is Large ribosomal subunit protein uL13 from Brucella abortus (strain S19).